The chain runs to 580 residues: Cis-3-hydroxy-L-proline dehydratase (580 aa).

Ser66 acts as the Proton acceptor in catalysis.

The protein belongs to the AcnX family. Monomer. It depends on Fe(3+) as a cofactor.

It carries out the reaction cis-3-hydroxy-L-proline = 1-pyrroline-2-carboxylate + H2O. Inhibited by Zn(2+), Cd(2+) and Hg(2+), but not by Co(2+), Ni(2+), Mn(2+), Sr(2+), Mg(2+), or Fe(3+). Inhibited by pyrrole-2-carboxylate and its derivative 2-thiophenecarboxylate, but not by trans-aconitate, fluorocitrate and oxalomalate, which are typical inhibitors of the aconitase enzymes. Its function is as follows. Catalyzes the dehydration of cis-3-hydroxy-L-proline (c3LHyp) to Delta(1)-pyrroline-2-carboxylate (Pyr2C). Also has activity with (2S,3S,4R)-3,4-dihydroxyproline as substrate, albeit at about 300-fold lower rate. No activity with L-proline, trans-4-hydroxy-L-proline (t4LHyp), cis-4-hydroxy-L-proline (c4LHyp), trans-3-hydroxy-L-proline (t3LHyp), D-proline, cis-4-hydroxy-D-proline (c4DHyp), trans-4-hydroxy-D-proline (t4DHyp) or L-serine as substrates. No hydro-lyase activity with citrate or cis-acotinate. Does not catalyze 2-epimerization of c3LHyp to trans-3-hydroxy-D-proline (t3DHyp). Involved in a degradation pathway that converts c3LHyp to L-proline, which would allow P.aeruginosa to grow on c3LHyp as a sole carbon source. The polypeptide is Cis-3-hydroxy-L-proline dehydratase (Pseudomonas aeruginosa (strain ATCC 15692 / DSM 22644 / CIP 104116 / JCM 14847 / LMG 12228 / 1C / PRS 101 / PAO1)).